The primary structure comprises 833 residues: Leucine--tRNA ligase (833 aa).

The 'HIGH' region motif lies at 41–52 (PYPSGAGLHVGH). Residues 610-614 (KMSKS) carry the 'KMSKS' region motif. An ATP-binding site is contributed by K613.

Belongs to the class-I aminoacyl-tRNA synthetase family.

It is found in the cytoplasm. It catalyses the reaction tRNA(Leu) + L-leucine + ATP = L-leucyl-tRNA(Leu) + AMP + diphosphate. In Streptococcus agalactiae serotype III (strain NEM316), this protein is Leucine--tRNA ligase.